The sequence spans 480 residues: Probable GH family 25 lysozyme 3 (480 aa).

A signal peptide spans 1 to 20; it reads MNKLILSILSVLLIVSIASA. Residues 21-231 form the Ch-type lysozyme domain; sequence GNGIDISSGT…STTSSSATSS (211 aa). Catalysis depends on residues D25, D114, and E116. Positions 219–472 are enriched in low complexity; it reads SGSSTTSSSA…SSGSGNYTSG (254 aa). Positions 219–480 are disordered; it reads SGSSTTSSSA…SGSGNGAFLF (262 aa). 5 N-linked (GlcNAc...) asparagine glycosylation sites follow: N423, N428, N437, N446, and N468.

Belongs to the glycosyl hydrolase 25 family.

It is found in the secreted. The catalysed reaction is Hydrolysis of (1-&gt;4)-beta-linkages between N-acetylmuramic acid and N-acetyl-D-glucosamine residues in a peptidoglycan and between N-acetyl-D-glucosamine residues in chitodextrins.. The protein is Probable GH family 25 lysozyme 3 of Dictyostelium discoideum (Social amoeba).